The primary structure comprises 384 residues: A-type ATP synthase subunit C (384 aa).

The protein belongs to the V-ATPase V0D/AC39 subunit family. Has multiple subunits with at least A(3), B(3), C, D, E, F, H, I and proteolipid K(x).

The protein resides in the cell membrane. Its function is as follows. Component of the A-type ATP synthase that produces ATP from ADP in the presence of a proton gradient across the membrane. This Methanobrevibacter smithii (strain ATCC 35061 / DSM 861 / OCM 144 / PS) protein is A-type ATP synthase subunit C.